The sequence spans 469 residues: Glutamate--tRNA ligase (469 aa).

Residues Pro-9 to Gly-19 carry the 'HIGH' region motif. Positions 98, 100, 125, and 127 each coordinate Zn(2+). The short motif at Lys-236–Arg-240 is the 'KMSKS' region element. Lys-239 is a binding site for ATP.

The protein belongs to the class-I aminoacyl-tRNA synthetase family. Glutamate--tRNA ligase type 1 subfamily. As to quaternary structure, monomer. Requires Zn(2+) as cofactor.

The protein localises to the cytoplasm. The catalysed reaction is tRNA(Glu) + L-glutamate + ATP = L-glutamyl-tRNA(Glu) + AMP + diphosphate. Catalyzes the attachment of glutamate to tRNA(Glu) in a two-step reaction: glutamate is first activated by ATP to form Glu-AMP and then transferred to the acceptor end of tRNA(Glu). The chain is Glutamate--tRNA ligase from Shewanella halifaxensis (strain HAW-EB4).